The chain runs to 89 residues: Large ribosomal subunit protein bL27 (89 aa).

A disordered region spans residues 1–26 (MAHKKAGGSSRNGRDSAGQRRGVKRF).

This sequence belongs to the bacterial ribosomal protein bL27 family.

The polypeptide is Large ribosomal subunit protein bL27 (Nitratidesulfovibrio vulgaris (strain DSM 19637 / Miyazaki F) (Desulfovibrio vulgaris)).